The primary structure comprises 421 residues: Inhibitor of growth protein 3 (421 aa).

Positions 129–163 (PSQPVNNHHAHSHTPVEKRKYNPTSHHAAADHIPE) are disordered. Residues Lys148, Lys165, and Lys167 each participate in a glycyl lysine isopeptide (Lys-Gly) (interchain with G-Cter in SUMO2) cross-link. An N6-acetyllysine modification is found at Lys181. A Glycyl lysine isopeptide (Lys-Gly) (interchain with G-Cter in SUMO2) cross-link involves residue Lys256. The residue at position 264 (Lys264) is an N6-acetyllysine. Polar residues predominate over residues 286–296 (TQNASSSATDS). The segment at 286–323 (TQNASSSATDSRSGRKSKNNTKSSSQQSSSSSSSSSSS) is disordered. Over residues 308 to 323 (SSSQQSSSSSSSSSSS) the composition is skewed to low complexity. The segment at 363–412 (PRYCICNQVSYGEMVGCDNQDCPIEWFHYGCVGLTEAPKGKWFCPQCTAA) adopts a PHD-type zinc-finger fold. Zn(2+)-binding residues include Cys366, Cys368, Cys379, Cys384, His390, Cys393, Cys406, and Cys409.

It belongs to the ING family. As to quaternary structure, interacts with H3K4me3 and to a lesser extent with H3K4me2. Component of the NuA4 histone acetyltransferase complex which contains the catalytic subunit KAT5/TIP60 and the subunits EP400, TRRAP/PAF400, BRD8/SMAP, EPC1, DMAP1/DNMAP1, RUVBL1/TIP49, RUVBL2, ING3, actin, ACTL6A/BAF53A, MORF4L1/MRG15, MORF4L2/MRGX, MRGBP, YEATS4/GAS41, VPS72/YL1 and MEAF6. The NuA4 complex interacts with MYC. HTATTIP/TIP60, EPC1, and ING3 together constitute a minimal HAT complex termed Piccolo NuA4. Component of a SWR1-like complex.

It localises to the nucleus. Its function is as follows. Component of the NuA4 histone acetyltransferase (HAT) complex which is involved in transcriptional activation of select genes principally by acetylation of nucleosomal histones H4 and H2A. This modification may both alter nucleosome - DNA interactions and promote interaction of the modified histones with other proteins which positively regulate transcription. This complex may be required for the activation of transcriptional programs associated with oncogene and proto-oncogene mediated growth induction, tumor suppressor mediated growth arrest and replicative senescence, apoptosis, and DNA repair. NuA4 may also play a direct role in DNA repair when directly recruited to sites of DNA damage. Component of a SWR1-like complex that specifically mediates the removal of histone H2A.Z/H2AZ1 from the nucleosome. The protein is Inhibitor of growth protein 3 (Ing3) of Mus musculus (Mouse).